The chain runs to 518 residues: Membrane-bound lytic murein transglycosylase F (518 aa).

The signal sequence occupies residues 1–21 (MKKLKINYLFIGILALLLAVA). A non-LT domain region spans residues 22–269 (LWPSIPWFGK…RIEEKYLGHG (248 aa)). Residues 270–518 (DDFDYVDTRT…SRKGSEEKQN (249 aa)) form an LT domain region. The active site involves Glu-314.

The protein in the N-terminal section; belongs to the bacterial solute-binding protein 3 family. This sequence in the C-terminal section; belongs to the transglycosylase Slt family.

The protein resides in the cell outer membrane. It catalyses the reaction Exolytic cleavage of the (1-&gt;4)-beta-glycosidic linkage between N-acetylmuramic acid (MurNAc) and N-acetylglucosamine (GlcNAc) residues in peptidoglycan, from either the reducing or the non-reducing ends of the peptidoglycan chains, with concomitant formation of a 1,6-anhydrobond in the MurNAc residue.. Functionally, murein-degrading enzyme that degrades murein glycan strands and insoluble, high-molecular weight murein sacculi, with the concomitant formation of a 1,6-anhydromuramoyl product. Lytic transglycosylases (LTs) play an integral role in the metabolism of the peptidoglycan (PG) sacculus. Their lytic action creates space within the PG sacculus to allow for its expansion as well as for the insertion of various structures such as secretion systems and flagella. The polypeptide is Membrane-bound lytic murein transglycosylase F (Escherichia coli (strain SMS-3-5 / SECEC)).